The chain runs to 203 residues: Ras-related protein Rab-24 (203 aa).

Tyrosine 17 carries the phosphotyrosine modification. GTP is bound by residues glycine 19, lysine 20, threonine 21, and threonine 40. Positions 21, 40, and 63 each coordinate Mg(2+). The interval 30 to 45 is switch I; sequence DRFLVGPYQNTIGAAF. The switch II stretch occupies residues 63-80; the sequence is DTAGSERYEAMSRIYYRG. Residues glycine 66, lysine 121, aspartate 123, and lysine 156 each contribute to the GTP site. The residue at position 172 (tyrosine 172) is a Phosphotyrosine. 2 S-geranylgeranyl cysteine lipidation sites follow: cysteine 200 and cysteine 201.

This sequence belongs to the small GTPase superfamily. Rab family. Interacts with ZFYVE20. Does not interact with the GDP dissociation inhibitors ARHGDIA and ARHGDIB. It depends on Mg(2+) as a cofactor. In terms of processing, prenylated; prenylation is required for RAB24 localization to autophagosomes. Isoprenylation is inefficient compared to other Rab family members. Phosphorylated at Tyr-17 and Tyr-172. Cytosolic pool of RAB24 is more phosphorylated than the membrane-associated pool. Widely expressed, with highest expression in brain.

It localises to the cytoplasm. The protein resides in the cytosol. It is found in the membrane. Its subcellular location is the cytoplasmic vesicle. The protein localises to the autophagosome membrane. It localises to the perinuclear region. The protein resides in the cytoskeleton. It is found in the spindle. It carries out the reaction GTP + H2O = GDP + phosphate + H(+). Regulated by guanine nucleotide exchange factors (GEFs) which promote the exchange of bound GDP for free GTP. Regulated by GTPase activating proteins (GAPs) which increase the GTP hydrolysis activity. Inhibited by GDP dissociation inhibitors (GDIs). In terms of biological role, the small GTPases Rab are key regulators of intracellular membrane trafficking, from the formation of transport vesicles to their fusion with membranes. Rabs cycle between an inactive GDP-bound form and an active GTP-bound form that is able to recruit to membranes different sets of downstream effectors directly responsible for vesicle formation, movement, tethering and fusion. RAB24 is an atypical RAB protein that presents low GTPase activity and thereby exists predominantly in the GTP-bound active state. RAB24 is required for the clearance of late autophagic vacuoles under basal conditions. It is not needed for starvation-induced autophagy. Involved in the modulation of meiotic apparatus assembly and meiotic progression during oocyte maturation, possibly through regulation of kinetochore-microtubule interaction. This chain is Ras-related protein Rab-24, found in Mus musculus (Mouse).